A 201-amino-acid chain; its full sequence is Pyridoxine/pyridoxamine 5'-phosphate oxidase (201 aa).

FMN contacts are provided by residues 49–54 (RMVLLK), 64–65 (YT), Lys-71, and Gln-93. Residue Lys-54 coordinates substrate. Substrate-binding residues include Tyr-111, Arg-115, and Ser-119. FMN contacts are provided by residues 128 to 129 (QS) and Trp-172. Position 178 to 180 (178 to 180 (RLH)) interacts with substrate. Residue Arg-182 participates in FMN binding.

It belongs to the pyridoxamine 5'-phosphate oxidase family. Homodimer. FMN serves as cofactor.

It carries out the reaction pyridoxamine 5'-phosphate + O2 + H2O = pyridoxal 5'-phosphate + H2O2 + NH4(+). It catalyses the reaction pyridoxine 5'-phosphate + O2 = pyridoxal 5'-phosphate + H2O2. It functions in the pathway cofactor metabolism; pyridoxal 5'-phosphate salvage; pyridoxal 5'-phosphate from pyridoxamine 5'-phosphate: step 1/1. It participates in cofactor metabolism; pyridoxal 5'-phosphate salvage; pyridoxal 5'-phosphate from pyridoxine 5'-phosphate: step 1/1. Functionally, catalyzes the oxidation of either pyridoxine 5'-phosphate (PNP) or pyridoxamine 5'-phosphate (PMP) into pyridoxal 5'-phosphate (PLP). This chain is Pyridoxine/pyridoxamine 5'-phosphate oxidase, found in Ruegeria sp. (strain TM1040) (Silicibacter sp.).